We begin with the raw amino-acid sequence, 111 residues long: Flagellar hook-basal body complex protein FliE (111 aa).

The protein belongs to the FliE family.

The protein resides in the bacterial flagellum basal body. In Sinorhizobium fredii (strain NBRC 101917 / NGR234), this protein is Flagellar hook-basal body complex protein FliE.